A 31-amino-acid polypeptide reads, in one-letter code: Photosystem II reaction center protein T (31 aa).

A helical transmembrane segment spans residues 3-23 (ALVYTFLLIGTLGVIFFAIFF).

Belongs to the PsbT family. In terms of assembly, PSII is composed of 1 copy each of membrane proteins PsbA, PsbB, PsbC, PsbD, PsbE, PsbF, PsbH, PsbI, PsbJ, PsbK, PsbL, PsbM, PsbT, PsbY, PsbZ, Psb30/Ycf12, at least 3 peripheral proteins of the oxygen-evolving complex and a large number of cofactors. It forms dimeric complexes.

It localises to the plastid. The protein localises to the chloroplast thylakoid membrane. Functionally, found at the monomer-monomer interface of the photosystem II (PS II) dimer, plays a role in assembly and dimerization of PSII. PSII is a light-driven water plastoquinone oxidoreductase, using light energy to abstract electrons from H(2)O, generating a proton gradient subsequently used for ATP formation. This Euglena gracilis protein is Photosystem II reaction center protein T.